A 243-amino-acid polypeptide reads, in one-letter code: Terpene cyclase dpmpB (243 aa).

A run of 7 helical transmembrane segments spans residues 13–33, 51–71, 78–98, 112–132, 141–161, 169–189, and 207–227; these read FLEVAWLADACKLLMGVGWTA, ALMPLCCNFAWELVYALILPF, WVHVTGLAFNCGVMYTAIKFA, LTWIFIASVAGWMSAHLALAA, AWSAYGCQLLLSVGGLCQLLC, SYLLWFSRFFGSLVLIPQDIL, and LWFVSIFLILDGSYGILLWYV.

This sequence belongs to the paxB family.

It localises to the membrane. It functions in the pathway secondary metabolite biosynthesis; terpenoid biosynthesis. In terms of biological role, terpene cyclase; part of the gene cluster that mediates the biosynthesis of diterpenoid pyrones. The first step of the pathway is the synthesis of the alpha-pyrone moiety by the polyketide synthase dpmpA via condensation of one acetyl-CoA starter unit with 3 malonyl-CoA units and 2 methylations. The alpha-pyrone is then combined with geranylgeranyl pyrophosphate (GGPP) formed by the GGPP synthase dpmpD through the action of the prenyltransferase dpmpC to yield a linear alpha-pyrone diterpenoid. Subsequent steps in the diterpenoid pyrone biosynthetic pathway involve the decalin core formation, which is initiated by the epoxidation of the C10-C11 olefin by the FAD-dependent oxidoreductase dpmpE, and is followed by a cyclization cascade catalyzed by the terpene cyclase dpmpB. The short chain dehydrogenase/reductase dpmpG then oxidizes the 8S hydroxy group to a ketone and the short chain dehydrogenase/reductase dpmpH reduces the ketone to the 8R hydroxy group to yield higginsianin B. Higginsianin B is further methylated by the methyltransferase dpmpI to produce the intermediate named FDDP B. The cytochrome P450 monooxygenase dpmpJ then oxidizes the C-26 methyl to primary alcohol, producing the final diterpenoid pyrone with a C-26 primary alcohol on the gamma-pyrone moiety named FDDP C. This chain is Terpene cyclase dpmpB, found in Macrophomina phaseolina (strain MS6) (Charcoal rot fungus).